The primary structure comprises 249 residues: MQFLAHDNFHTLQVKKVRFLHPQQEVFLLAGLLLNIKQFVRAIKERNNVFKIDVFLRSLLYQLPFHLGSCFHDAPRELIPATEPELCAWFSLQTGYAPASTSGRVNLHVPGTKTSRRRIIQRSFASDFSEKLKRFPECLFVSLELFQRLLSTWTKDVERRIFFSCREIPLGSDTLMELANLGEFLRVMVVGEQFHNSRLLSRLAVHCYKIYGEDGFISFWRIANLDHFDCFLTPEEILFSSSVYTEMFV.

The 5-residue stretch at 63–67 folds into the F-box-like domain; sequence LPFHL.

It belongs to the polerovirus P0 protein family. In terms of assembly, interacts (via F-box-like domain) with host AGO1; this interaction targets AGO1 for degradation, and thereby suppresses the silencing function of the latter. Interacts (via F-box-like domain) with host ASK1 and ASK2 (SKP proteins); these interactions are essential for viral pathogenicity. Part of a SCF P0 complex composed of P0 and the host proteins SKP and CUL1.

In terms of biological role, suppressor of RNA-mediated gene silencing, also known as post-transcriptional gene silencing (PTGS), a mechanism of plant viral defense that limits the accumulation of viral RNAs. The P0 protein suppresses local PTGS using its F-box-like domain to mediate destabilization and degradation of the AGO1 protein. In Turnip yellows virus (isolate FL-1) (TuYV), this protein is Suppressor of silencing P0.